A 273-amino-acid chain; its full sequence is 2,3,4,5-tetrahydropyridine-2,6-dicarboxylate N-succinyltransferase (273 aa).

Residues Arg104 and Asp141 each coordinate substrate.

It belongs to the transferase hexapeptide repeat family. Homotrimer.

The protein resides in the cytoplasm. It catalyses the reaction (S)-2,3,4,5-tetrahydrodipicolinate + succinyl-CoA + H2O = (S)-2-succinylamino-6-oxoheptanedioate + CoA. It functions in the pathway amino-acid biosynthesis; L-lysine biosynthesis via DAP pathway; LL-2,6-diaminopimelate from (S)-tetrahydrodipicolinate (succinylase route): step 1/3. In Neisseria meningitidis serogroup A / serotype 4A (strain DSM 15465 / Z2491), this protein is 2,3,4,5-tetrahydropyridine-2,6-dicarboxylate N-succinyltransferase.